A 237-amino-acid chain; its full sequence is Photosystem I-associated linker protein CpcL (237 aa).

The PBS-linker domain occupies 11 to 191; it reads TTQNQRVQSF…DYRDRAGIVR (181 aa). Residues 208–228 traverse the membrane as a helical segment; sequence GVAILGVLLAISAGMTFLFVL.

It belongs to the phycobilisome linker protein family. Part of a specialized phycobilisome (PBS), a structure that is usually composed of two distinct substructures: a core complex and a number of rods radiating from the core. This protein is part of a core-less PBS rod (called CpcL-PBS). In vegetative cells associated substoichiometrically with photosystem I and phycobiliproteins phycocyanin as well as phycoerythrocyanin in the thylakoid membrane, not found in conventional, hemidiscoidal phycobilisomes.

It localises to the cellular thylakoid membrane. Rod linker protein, associated with phycocyanin (PC). Linker polypeptides determine the state of aggregation and the location of the disk-shaped phycobiliprotein units within the phycobilisome (PBS) and modulate their spectroscopic properties in order to mediate a directed and optimal energy transfer. Forms a supercomplex with tetrameric photosystem I (PSI) and PC that allows efficient energy transfer from PC to PSI. This protein seems to be in the middle of the PC hexameric rod and may anchor the PC rods at the periphery of PSI tetramers. May be involved in the cyclic electron transport around PSI that provides ATP needed for N(2) fixation in heterocysts. This Nostoc sp. (strain PCC 7120 / SAG 25.82 / UTEX 2576) protein is Photosystem I-associated linker protein CpcL.